The following is an 876-amino-acid chain: Protein argonaute 17 (876 aa).

A PAZ domain is found at 246-338 (PVVDYVAQLL…LPLEVCKIAE (93 aa)). In terms of domain architecture, Piwi spans 514-834 (LLIVILPNNN…LSSRARCYIK (321 aa)). Residues 839 to 859 (GDSTSHTSLPSEEDSSAASET) form a disordered region.

Belongs to the argonaute family. Ago subfamily.

Probably involved in the RNA silencing pathway. May bind to short RNAs such as microRNAs (miRNAs) or short interfering RNAs (siRNAs), and represses the translation of mRNAs which are complementary to them. The chain is Protein argonaute 17 (AGO17) from Oryza sativa subsp. japonica (Rice).